Reading from the N-terminus, the 132-residue chain is MAMTDPLGDMLTRIRNGAARRKSSVSTPASKLRARVLDVLQAEGYIRGYSEVEFGNGKAELSIELKYYEGASVIREIARVSKPGRRVYVSVKSIPQVANGLGITILSTPKGVMADHQAREQNVGGEVLCSVF.

It belongs to the universal ribosomal protein uS8 family. As to quaternary structure, part of the 30S ribosomal subunit. Contacts proteins S5 and S12.

Functionally, one of the primary rRNA binding proteins, it binds directly to 16S rRNA central domain where it helps coordinate assembly of the platform of the 30S subunit. This Sinorhizobium medicae (strain WSM419) (Ensifer medicae) protein is Small ribosomal subunit protein uS8.